We begin with the raw amino-acid sequence, 53 residues long: MPHLSPMSWITSMLMFWISVSILFSTLWWSNNYLFSSKMTNCAPKSLTPWNWL.

The chain crosses the membrane as a helical span at residues 9-29 (WITSMLMFWISVSILFSTLWW).

The protein belongs to the ATPase protein 8 family. As to quaternary structure, F-type ATPases have 2 components, CF(1) - the catalytic core - and CF(0) - the membrane proton channel.

The protein localises to the mitochondrion membrane. In terms of biological role, mitochondrial membrane ATP synthase (F(1)F(0) ATP synthase or Complex V) produces ATP from ADP in the presence of a proton gradient across the membrane which is generated by electron transport complexes of the respiratory chain. F-type ATPases consist of two structural domains, F(1) - containing the extramembraneous catalytic core and F(0) - containing the membrane proton channel, linked together by a central stalk and a peripheral stalk. During catalysis, ATP synthesis in the catalytic domain of F(1) is coupled via a rotary mechanism of the central stalk subunits to proton translocation. Part of the complex F(0) domain. Minor subunit located with subunit a in the membrane. The polypeptide is ATP synthase protein 8 (MT-ATP8) (Lumbricus terrestris (Common earthworm)).